A 161-amino-acid chain; its full sequence is MPSFDIVSEIDVQEVDNAVNQARKEIEARYDFKGSKAELQWDKKEMVLLAEDDYKIGAMAGILQTKLHRRGIDIKAIKFEKIEEAGGRMLRQKVTLVQGIDREIAKDIIKLIKDSKLKVQPQVADDKLKVTSKSIDELQECISLVRGGNFPLPLQFNNMRA.

Belongs to the YajQ family.

In terms of biological role, nucleotide-binding protein. This Bdellovibrio bacteriovorus (strain ATCC 15356 / DSM 50701 / NCIMB 9529 / HD100) protein is Nucleotide-binding protein Bd0338.